Here is a 595-residue protein sequence, read N- to C-terminus: Adenine deaminase 2 (595 aa).

This sequence belongs to the metallo-dependent hydrolases superfamily. Adenine deaminase family. Mn(2+) is required as a cofactor.

The enzyme catalyses adenine + H2O + H(+) = hypoxanthine + NH4(+). This is Adenine deaminase 2 from Rhizobium johnstonii (strain DSM 114642 / LMG 32736 / 3841) (Rhizobium leguminosarum bv. viciae).